The following is a 339-amino-acid chain: Serpentine receptor class alpha-20 (339 aa).

The next 6 membrane-spanning stretches (helical) occupy residues 30-50, 113-132, 151-171, 199-219, 249-269, and 284-304; these read VSFV…VLAI, LYFY…SLTF, VSIS…YFGL, FRTT…YLNV, CILI…VNYI, and IAPF…VIYF.

Belongs to the nematode receptor-like protein sra family.

It is found in the membrane. This chain is Serpentine receptor class alpha-20 (sra-20), found in Caenorhabditis elegans.